The chain runs to 1054 residues: Isoleucine--tRNA ligase (1054 aa).

The 'HIGH' region motif lies at 58-68; sequence PFANGLPHYGH. The 'KMSKS' region motif lies at 627–631; the sequence is KMSKS. Lys630 is an ATP binding site.

Belongs to the class-I aminoacyl-tRNA synthetase family. IleS type 2 subfamily. As to quaternary structure, monomer. The cofactor is Zn(2+).

The protein resides in the cytoplasm. The catalysed reaction is tRNA(Ile) + L-isoleucine + ATP = L-isoleucyl-tRNA(Ile) + AMP + diphosphate. Catalyzes the attachment of isoleucine to tRNA(Ile). As IleRS can inadvertently accommodate and process structurally similar amino acids such as valine, to avoid such errors it has two additional distinct tRNA(Ile)-dependent editing activities. One activity is designated as 'pretransfer' editing and involves the hydrolysis of activated Val-AMP. The other activity is designated 'posttransfer' editing and involves deacylation of mischarged Val-tRNA(Ile). This is Isoleucine--tRNA ligase from Corynebacterium efficiens (strain DSM 44549 / YS-314 / AJ 12310 / JCM 11189 / NBRC 100395).